Consider the following 163-residue polypeptide: GPI-anchored protein LLG2 (163 aa).

The first 23 residues, 1–23 (MEISPYCLLSLLPIFLLSGFSLS), serve as a signal peptide directing secretion. The N-linked (GlcNAc...) asparagine glycan is linked to asparagine 52. Residue serine 135 is the site of GPI-anchor amidated serine attachment. Positions 136–163 (DSIPRASTTASLAVLSTFLVLCLLFLSS) are cleaved as a propeptide — removed in mature form.

As to expression, expressed in pollen, pollen tubes, sporophytic pistil tissues, in the early stages of female gametophyte development, and in unfertilized, mature ovules.

It is found in the cell membrane. In Arabidopsis thaliana (Mouse-ear cress), this protein is GPI-anchored protein LLG2.